The primary structure comprises 303 residues: Diaminopimelate epimerase (303 aa).

Substrate-binding residues include asparagine 15, glutamine 47, and asparagine 67. Cysteine 76 (proton donor) is an active-site residue. Substrate is bound by residues 77–78, asparagine 163, asparagine 197, and 215–216; these read GN and ER. Cysteine 224 acts as the Proton acceptor in catalysis. 225–226 is a substrate binding site; that stretch reads GS. Positions 279–303 are disordered; that stretch reads DPATGEWSRDTQGLQGSGNADRGTA.

Belongs to the diaminopimelate epimerase family. In terms of assembly, homodimer.

It localises to the cytoplasm. It carries out the reaction (2S,6S)-2,6-diaminopimelate = meso-2,6-diaminopimelate. The protein operates within amino-acid biosynthesis; L-lysine biosynthesis via DAP pathway; DL-2,6-diaminopimelate from LL-2,6-diaminopimelate: step 1/1. In terms of biological role, catalyzes the stereoinversion of LL-2,6-diaminopimelate (L,L-DAP) to meso-diaminopimelate (meso-DAP), a precursor of L-lysine and an essential component of the bacterial peptidoglycan. The polypeptide is Diaminopimelate epimerase (Brucella canis (strain ATCC 23365 / NCTC 10854 / RM-666)).